The sequence spans 430 residues: MTLAASSQRSQIIRSKFRSVLQLRIHRRYQDPTLSGSFTASPVLDPDPWISAADPALALAPASPLGPAPFLFNPEVLLPEPKPCWSLKKESPKTSQHWREPKPKGNLTYHQYIPPEPRQGYRADPQVEGSPLDPPGPPLWEGTTSQQPPPRMKPTPLTPSPPGVPSPSPLPHKLELQTLKLEELTVSELRQQLRLRGLPVSGTKSMLLERMRGGAPPRERPKARREDSAAGAPWPRFRPKALGAARSACSFKLSPTSHSPPPPRAVETLVTASASAPVPVATTAQAPTPAPVPVPSSAPASTALTLEEELQEAIRRAQLLPNRGIDDILEDQVEPEDPLPAIPLDFPGSFDMLSPSPDSEGLSSVFSSSLPSPTNSPSPSPRGPTDFLDWLEALSGGPSLGCGPPAPSIFSADLSDSSGTRLWDLLEDPW.

The MEF2-binding signature appears at 12-28 (IIRSKFRSVLQLRIHRR). Disordered regions lie at residues 84 to 172 (CWSL…PLPH), 204 to 239 (KSMLLERMRGGAPPRERPKARREDSAAGAPWPRFRP), 280 to 301 (VATTAQAPTPAPVPVPSSAPAS), and 330 to 416 (EDQV…DLSD). Over residues 87-103 (LKKESPKTSQHWREPKP) the composition is skewed to basic and acidic residues. Over residues 147 to 170 (QPPPRMKPTPLTPSPPGVPSPSPL) the composition is skewed to pro residues. The SAP domain maps to 181–215 (LEELTVSELRQQLRLRGLPVSGTKSMLLERMRGGA). A compositionally biased stretch (basic and acidic residues) spans 207-228 (LLERMRGGAPPRERPKARREDS). The interval 224–430 (RREDSAAGAP…RLWDLLEDPW (207 aa)) is transcription activation. 2 stretches are compositionally biased toward low complexity: residues 363–373 (SSVFSSSLPSP) and 393–403 (ALSGGPSLGCG).

Interacts with MEF2C.

The protein resides in the nucleus. Transcriptional coactivator. Stimulates the transcriptional activity of MEF2C. Stimulates MYOD1 activity in part via MEF2, resulting in an enhancement of skeletal muscle differentiation. In Bos taurus (Bovine), this protein is MEF2-activating motif and SAP domain-containing transcriptional regulator (MAMSTR).